Consider the following 448-residue polypeptide: Probable glycine dehydrogenase (decarboxylating) subunit 1 (448 aa).

This sequence belongs to the GcvP family. N-terminal subunit subfamily. The glycine cleavage system is composed of four proteins: P, T, L and H. In this organism, the P 'protein' is a heterodimer of two subunits.

The enzyme catalyses N(6)-[(R)-lipoyl]-L-lysyl-[glycine-cleavage complex H protein] + glycine + H(+) = N(6)-[(R)-S(8)-aminomethyldihydrolipoyl]-L-lysyl-[glycine-cleavage complex H protein] + CO2. Its function is as follows. The glycine cleavage system catalyzes the degradation of glycine. The P protein binds the alpha-amino group of glycine through its pyridoxal phosphate cofactor; CO(2) is released and the remaining methylamine moiety is then transferred to the lipoamide cofactor of the H protein. The protein is Probable glycine dehydrogenase (decarboxylating) subunit 1 of Bacillus pumilus (strain SAFR-032).